We begin with the raw amino-acid sequence, 643 residues long: MHLGDLTHPNELHGLKLSELEDVARQIRDRHLQVVSTSGGHLGPGLGVVELTLALYQTLDLDRDRVIWDVGHQAYPHKLITGRFNDFHTLRQQNGVAGYLKRSESNFDHFGAGHASTSISAALGMAMARDNRGEDFKCVAVIGDGALTGGMALEAINHAGHLPETPLLVVLNDNDMSISPPVGALSNVLNRARLSPPMQFLSGSVEESVRHLPFMGGELPAELNRLKGSMRRLAVPKVGAVFEELGFTYMGPIDGHDIGEMMRTFQAAHRDGGPVLVHVVTKKGKGYPYAEADQVGYHAQSAFDLTTGKAIPSKKPKPASYSKVFGQTLVKLCEQNSRVVGITAAMATGTGLDLLQKAVPNQYVDVGIAEQHAVTLAAGMACEGLRPVVAIYSTFLQRAYDQLIHDVGIQNLPVTFVLDRAGIVGADGPTHQGQYDISYMRSIPNFTVMAPKDEAELQRMLVTCLNHDGPTALRIPRGSGVGMPLMEEGWEALPIGRGELLREGDDLLIVAYGSMVHPALDTATLLEEAGLSTTVINARFLRPLDQALIHPLARRIRRVVTMEEGALAGGFGAAVLESLSDQDISIPLLRIGIPDKMVDHATPQQSKESLEMIPVQMAERIRRRFDLGGRDFAGAASVPAIQS.

Thiamine diphosphate is bound by residues H72 and 113–115; that span reads GHA. Residue D144 coordinates Mg(2+). Thiamine diphosphate-binding positions include 145–146, N174, Y287, and E370; that span reads GA. Mg(2+) is bound at residue N174.

This sequence belongs to the transketolase family. DXPS subfamily. As to quaternary structure, homodimer. It depends on Mg(2+) as a cofactor. Thiamine diphosphate serves as cofactor.

It carries out the reaction D-glyceraldehyde 3-phosphate + pyruvate + H(+) = 1-deoxy-D-xylulose 5-phosphate + CO2. The protein operates within metabolic intermediate biosynthesis; 1-deoxy-D-xylulose 5-phosphate biosynthesis; 1-deoxy-D-xylulose 5-phosphate from D-glyceraldehyde 3-phosphate and pyruvate: step 1/1. In terms of biological role, catalyzes the acyloin condensation reaction between C atoms 2 and 3 of pyruvate and glyceraldehyde 3-phosphate to yield 1-deoxy-D-xylulose-5-phosphate (DXP). This Parasynechococcus marenigrum (strain WH8102) protein is 1-deoxy-D-xylulose-5-phosphate synthase.